The sequence spans 318 residues: D-alanine--D-alanine ligase (318 aa).

In terms of domain architecture, ATP-grasp spans 116–311; that stretch reads KQVWQSLGIP…FQQLVLAILA (196 aa). 142–197 lines the ATP pocket; the sequence is SAELGFPLIVKPAHEGSSIGMAKVNSEQELVAAWKDAAKYDSQVLVEQWIHGPEFT. 3 residues coordinate Mg(2+): Asp265, Glu278, and Asn280.

The protein belongs to the D-alanine--D-alanine ligase family. Mg(2+) is required as a cofactor. Requires Mn(2+) as cofactor.

The protein resides in the cytoplasm. It carries out the reaction 2 D-alanine + ATP = D-alanyl-D-alanine + ADP + phosphate + H(+). It functions in the pathway cell wall biogenesis; peptidoglycan biosynthesis. In terms of biological role, cell wall formation. The protein is D-alanine--D-alanine ligase of Pseudomonas entomophila (strain L48).